We begin with the raw amino-acid sequence, 282 residues long: Bis(5'-nucleosyl)-tetraphosphatase, symmetrical (282 aa).

Belongs to the Ap4A hydrolase family.

The catalysed reaction is P(1),P(4)-bis(5'-adenosyl) tetraphosphate + H2O = 2 ADP + 2 H(+). Hydrolyzes diadenosine 5',5'''-P1,P4-tetraphosphate to yield ADP. This is Bis(5'-nucleosyl)-tetraphosphatase, symmetrical from Klebsiella pneumoniae (strain 342).